Here is a 170-residue protein sequence, read N- to C-terminus: Adenine phosphoribosyltransferase (170 aa).

This sequence belongs to the purine/pyrimidine phosphoribosyltransferase family. As to quaternary structure, homodimer.

The protein localises to the cytoplasm. It catalyses the reaction AMP + diphosphate = 5-phospho-alpha-D-ribose 1-diphosphate + adenine. It participates in purine metabolism; AMP biosynthesis via salvage pathway; AMP from adenine: step 1/1. Functionally, catalyzes a salvage reaction resulting in the formation of AMP, that is energically less costly than de novo synthesis. The sequence is that of Adenine phosphoribosyltransferase from Carboxydothermus hydrogenoformans (strain ATCC BAA-161 / DSM 6008 / Z-2901).